Reading from the N-terminus, the 431-residue chain is Serine--tRNA ligase (431 aa).

Residue 235–237 coordinates L-serine; it reads TAE. Residues 266–268 and Val282 each bind ATP; that span reads RRE. Glu289 is a binding site for L-serine. Position 353 to 356 (353 to 356) interacts with ATP; the sequence is EASS. Ser389 serves as a coordination point for L-serine.

Belongs to the class-II aminoacyl-tRNA synthetase family. Type-1 seryl-tRNA synthetase subfamily. In terms of assembly, homodimer. The tRNA molecule binds across the dimer.

It localises to the cytoplasm. The enzyme catalyses tRNA(Ser) + L-serine + ATP = L-seryl-tRNA(Ser) + AMP + diphosphate + H(+). It catalyses the reaction tRNA(Sec) + L-serine + ATP = L-seryl-tRNA(Sec) + AMP + diphosphate + H(+). Its pathway is aminoacyl-tRNA biosynthesis; selenocysteinyl-tRNA(Sec) biosynthesis; L-seryl-tRNA(Sec) from L-serine and tRNA(Sec): step 1/1. Catalyzes the attachment of serine to tRNA(Ser). Is also able to aminoacylate tRNA(Sec) with serine, to form the misacylated tRNA L-seryl-tRNA(Sec), which will be further converted into selenocysteinyl-tRNA(Sec). This chain is Serine--tRNA ligase, found in Chlorobium phaeobacteroides (strain DSM 266 / SMG 266 / 2430).